The chain runs to 87 residues: MALLEFFRPQKKATANIAKERLQIIVAERRNGGPAPSYLPQLKEDILKVISKYVEVNPDMVTVSLEQKEEDLSVLELNVTLPDEDDH.

It belongs to the MinE family.

Functionally, prevents the cell division inhibition by proteins MinC and MinD at internal division sites while permitting inhibition at polar sites. This ensures cell division at the proper site by restricting the formation of a division septum at the midpoint of the long axis of the cell. The polypeptide is Cell division topological specificity factor (Aliivibrio fischeri (strain ATCC 700601 / ES114) (Vibrio fischeri)).